The chain runs to 384 residues: Lipid-A-disaccharide synthase 1 (384 aa).

This sequence belongs to the LpxB family.

The catalysed reaction is a lipid X + a UDP-2-N,3-O-bis[(3R)-3-hydroxyacyl]-alpha-D-glucosamine = a lipid A disaccharide + UDP + H(+). The protein operates within bacterial outer membrane biogenesis; LPS lipid A biosynthesis. In terms of biological role, condensation of UDP-2,3-diacylglucosamine and 2,3-diacylglucosamine-1-phosphate to form lipid A disaccharide, a precursor of lipid A, a phosphorylated glycolipid that anchors the lipopolysaccharide to the outer membrane of the cell. This is Lipid-A-disaccharide synthase 1 from Legionella pneumophila (strain Paris).